Consider the following 586-residue polypeptide: Glutamine--tRNA ligase (586 aa).

The 'HIGH' region motif lies at 58 to 68; that stretch reads PEPNGYLHIGH. Residues 59 to 61 and 65 to 71 contribute to the ATP site; these read EPN and HIGHAKS. Asp-91 and Tyr-240 together coordinate L-glutamine. ATP contacts are provided by residues Thr-259 and 294-295; that span reads RL. Residues 301 to 305 carry the 'KMSKS' region motif; sequence VTSKR.

This sequence belongs to the class-I aminoacyl-tRNA synthetase family. As to quaternary structure, monomer.

Its subcellular location is the cytoplasm. The enzyme catalyses tRNA(Gln) + L-glutamine + ATP = L-glutaminyl-tRNA(Gln) + AMP + diphosphate. The polypeptide is Glutamine--tRNA ligase (Bordetella avium (strain 197N)).